The sequence spans 353 residues: Guanine nucleotide-binding protein subunit alpha (353 aa).

Positions 1–26 are disordered; it reads MGCGMSTEEKEGKARNEEIENQLKRD. Gly2 is lipidated: N-myristoyl glycine. Cys3 carries S-palmitoyl cysteine lipidation. Residues 7–26 show a composition bias toward basic and acidic residues; sequence TEEKEGKARNEEIENQLKRD. Residues 32–353 form the G-alpha domain; the sequence is NEIKMLLLGA…QENLRLCGLI (322 aa). Positions 35–48 are G1 motif; sequence KMLLLGAGESGKST. Residues Glu43, Ser44, Gly45, Lys46, Ser47, Thr48, Asp150, Leu175, Thr181, Gly203, Asn269, Lys270, Asp272, and Ala325 each contribute to the GTP site. Ser47 contributes to the Mg(2+) binding site. A G2 motif region spans residues 173–181; it reads DVLRSRVKT. Thr181 is a binding site for Mg(2+). Positions 196 to 205 are G3 motif; it reads YRMFDVGGQR. Residues 265–272 are G4 motif; sequence ILFLNKID. Residues 323-328 form a G5 motif region; it reads TCATDT.

This sequence belongs to the G-alpha family. G(q) subfamily. As to quaternary structure, g proteins are composed of 3 units; alpha, beta and gamma. The alpha chain contains the guanine nucleotide binding site. Mg(2+) is required as a cofactor.

Guanine nucleotide-binding proteins (G proteins) are involved as modulators or transducers in various transmembrane signaling systems. In Cryphonectria parasitica (Chestnut blight fungus), this protein is Guanine nucleotide-binding protein subunit alpha.